We begin with the raw amino-acid sequence, 501 residues long: ATP synthase subunit alpha, chloroplastic (501 aa).

ATP is bound at residue 170 to 177 (GDRQTGKT).

This sequence belongs to the ATPase alpha/beta chains family. F-type ATPases have 2 components, CF(1) - the catalytic core - and CF(0) - the membrane proton channel. CF(1) has five subunits: alpha(3), beta(3), gamma(1), delta(1), epsilon(1). CF(0) has four main subunits: a, b, b' and c.

Its subcellular location is the plastid. The protein resides in the chloroplast thylakoid membrane. It catalyses the reaction ATP + H2O + 4 H(+)(in) = ADP + phosphate + 5 H(+)(out). Functionally, produces ATP from ADP in the presence of a proton gradient across the membrane. The alpha chain is a regulatory subunit. The chain is ATP synthase subunit alpha, chloroplastic from Nephroselmis olivacea (Green alga).